The following is a 39-amino-acid chain: uncharacterized protein (39 aa).

This is an uncharacterized protein from Treponema pallidum (strain Nichols).